A 474-amino-acid polypeptide reads, in one-letter code: Glutamyl-tRNA(Gln) amidotransferase subunit A (474 aa).

Catalysis depends on charge relay system residues Lys76 and Ser151. Ser175 acts as the Acyl-ester intermediate in catalysis.

It belongs to the amidase family. GatA subfamily. In terms of assembly, heterotrimer of A, B and C subunits.

It carries out the reaction L-glutamyl-tRNA(Gln) + L-glutamine + ATP + H2O = L-glutaminyl-tRNA(Gln) + L-glutamate + ADP + phosphate + H(+). Allows the formation of correctly charged Gln-tRNA(Gln) through the transamidation of misacylated Glu-tRNA(Gln) in organisms which lack glutaminyl-tRNA synthetase. The reaction takes place in the presence of glutamine and ATP through an activated gamma-phospho-Glu-tRNA(Gln). The sequence is that of Glutamyl-tRNA(Gln) amidotransferase subunit A from Chlorobium limicola (strain DSM 245 / NBRC 103803 / 6330).